A 160-amino-acid polypeptide reads, in one-letter code: Transcriptional repressor NrdR (160 aa).

A zinc finger lies at 3 to 34; sequence CPYCQCEDTQVKDSRPAEEGAVIRRRRVCSVC. The ATP-cone domain occupies 49-139; it reads LLVLKKSGRR…VYRDFRNASD (91 aa).

The protein belongs to the NrdR family. Requires Zn(2+) as cofactor.

Functionally, negatively regulates transcription of bacterial ribonucleotide reductase nrd genes and operons by binding to NrdR-boxes. The protein is Transcriptional repressor NrdR of Bartonella bacilliformis (strain ATCC 35685 / KC583 / Herrer 020/F12,63).